Here is a 198-residue protein sequence, read N- to C-terminus: Probable thymidylate kinase (198 aa).

9–16 (GIDGSGKT) serves as a coordination point for ATP.

It belongs to the thymidylate kinase family.

The catalysed reaction is dTMP + ATP = dTDP + ADP. This chain is Probable thymidylate kinase, found in Methanococcus vannielii (strain ATCC 35089 / DSM 1224 / JCM 13029 / OCM 148 / SB).